A 721-amino-acid polypeptide reads, in one-letter code: Polyribonucleotide nucleotidyltransferase (721 aa).

The Mg(2+) site is built by Asp-495 and Asp-501. Positions 562-621 constitute a KH domain; sequence PRLLSFRIDPELIGTVIGPGGRTIKGITERTNTKIDIEDGGIVTIASHDGAAAEAAQRII. The region spanning 631–699 is the S1 motif domain; it reads GEVFSGTITR…NRGRINLTLR (69 aa). Residues 700–721 are disordered; that stretch reads GVPQNGEETQSEPAPTPVAPLN.

The protein belongs to the polyribonucleotide nucleotidyltransferase family. It depends on Mg(2+) as a cofactor.

It is found in the cytoplasm. It carries out the reaction RNA(n+1) + phosphate = RNA(n) + a ribonucleoside 5'-diphosphate. Functionally, involved in mRNA degradation. Catalyzes the phosphorolysis of single-stranded polyribonucleotides processively in the 3'- to 5'-direction. The sequence is that of Polyribonucleotide nucleotidyltransferase from Prochlorococcus marinus (strain MIT 9303).